The sequence spans 248 residues: Thioredoxin-like protein AAED1, chloroplastic (248 aa).

The N-terminal 52 residues, 1–52, are a transit peptide targeting the chloroplast; the sequence is MAIALSSSSTITSITLQPKLKTIHGLGTVLPGYSVKSHFRSVSLRRSAVVVS. Alanine 53 is subject to N-acetylalanine.

Belongs to the peroxiredoxin-like PRXL2 family. PRXL2C subfamily.

It localises to the plastid. Its subcellular location is the chloroplast. In Arabidopsis thaliana (Mouse-ear cress), this protein is Thioredoxin-like protein AAED1, chloroplastic.